Reading from the N-terminus, the 77-residue chain is Early E3 9.0 kDa glycoprotein (77 aa).

Residue Asn-7 is glycosylated (N-linked (GlcNAc...) asparagine; by host). The chain crosses the membrane as a helical span at residues 27 to 47 (ITILIVIGILILSVILYFIFC).

The protein belongs to the adenoviridae E3A-1 family.

Its subcellular location is the host nucleus membrane. The chain is Early E3 9.0 kDa glycoprotein from Human adenovirus B serotype 3 (HAdV-3).